Reading from the N-terminus, the 225-residue chain is Transcription factor HES-7 (225 aa).

The bHLH domain maps to 12 to 69 (GPKMLKPLVEKRRRDRINRSLEELRLLLLERTRDQNLRNPKLEKAEILEFAVGYLRER). One can recognise an Orange domain in the interval 92-122 (YLSGFRECLLRLAAFAHDASPAARAQLFSAL). The segment at 125–225 (YLRPKPPRPK…PPPAFWRPWP (101 aa)) is disordered. Positions 147–158 (LDPAAPALGPAL) are enriched in low complexity. The span at 212–225 (APLPPPPAFWRPWP) shows a compositional bias: pro residues. The WRPW motif motif lies at 221–224 (WRPW).

Transcription repression requires formation of a complex with a corepressor protein of the Groucho/TLE family.

The protein localises to the nucleus. Its function is as follows. Transcriptional repressor. Represses transcription from both N box- and E box-containing promoters. May with HES1, cooperatively regulate somite formation in the presomitic mesoderm (PSM). May function as a segmentation clock, which is essential for coordinated somite segmentation. The protein is Transcription factor HES-7 (HES7) of Homo sapiens (Human).